A 170-amino-acid chain; its full sequence is J domain-containing protein (170 aa).

The J domain maps to 17 to 82 (DYYALLGCDE…SKRALYDKWR (66 aa)). Positions 101 to 170 (QQSMHWSKPN…VISKFRNYEI (70 aa)) are disordered. Residues 110–120 (NTKDRMLEGEP) are compositionally biased toward basic and acidic residues. Composition is skewed to low complexity over residues 121-135 (GKPS…SNPG) and 142-153 (GGAALWGRWGAG).

The protein is J domain-containing protein (jdp) of Manduca sexta (Tobacco hawkmoth).